Consider the following 72-residue polypeptide: Sec-independent protein translocase protein TatA (72 aa).

Residues 1 to 21 traverse the membrane as a helical segment; it reads MPFGLGLPEILVIGVIALLIF. Residues 41–72 form a disordered region; sequence KSGVSDEPAPQQSASKETAPNPPQSLPSGKDS.

Belongs to the TatA/E family. As to quaternary structure, forms a complex with TatC.

Its subcellular location is the cell inner membrane. Functionally, part of the twin-arginine translocation (Tat) system that transports large folded proteins containing a characteristic twin-arginine motif in their signal peptide across membranes. TatA could form the protein-conducting channel of the Tat system. The chain is Sec-independent protein translocase protein TatA from Gloeobacter violaceus (strain ATCC 29082 / PCC 7421).